The chain runs to 301 residues: MTFMEFEKLRHGTELIKRGFARMQKGGVIMDVTTPEQARIAEEAGAVAVMALQAVPADLRKAGGVARMADPEIVQQIIDTVTIPVMAKARIGHFVEAEILEALGVDMVDESEVLTPADPFYHIDKTQFTVPFVCGARNLGEALRRINEGAAMIRTKGEAGTGDVSQAVKHMKQIQGEIRALAGKTKEELIMVAREIEAPIELVVETAKMQRLPVVNFAAGGVATPADAALMMRLGADGVFVGSGIFKAENPEKMAKAVVEAVNNYDNPAKLAEISKGVGAGMKGISADMIPVQEALQERGW.

Asp-31 contacts D-ribose 5-phosphate. The active-site Schiff-base intermediate with D-ribose 5-phosphate is Lys-88. Residue Gly-160 participates in D-ribose 5-phosphate binding. Lys-172 is a binding site for D-glyceraldehyde 3-phosphate. Residues Gly-221 and 242–243 (GS) contribute to the D-ribose 5-phosphate site.

Belongs to the PdxS/SNZ family. In terms of assembly, in the presence of PdxT, forms a dodecamer of heterodimers.

The catalysed reaction is aldehydo-D-ribose 5-phosphate + D-glyceraldehyde 3-phosphate + L-glutamine = pyridoxal 5'-phosphate + L-glutamate + phosphate + 3 H2O + H(+). The protein operates within cofactor biosynthesis; pyridoxal 5'-phosphate biosynthesis. Functionally, catalyzes the formation of pyridoxal 5'-phosphate from ribose 5-phosphate (RBP), glyceraldehyde 3-phosphate (G3P) and ammonia. The ammonia is provided by the PdxT subunit. Can also use ribulose 5-phosphate and dihydroxyacetone phosphate as substrates, resulting from enzyme-catalyzed isomerization of RBP and G3P, respectively. In Methanosarcina mazei (strain ATCC BAA-159 / DSM 3647 / Goe1 / Go1 / JCM 11833 / OCM 88) (Methanosarcina frisia), this protein is Pyridoxal 5'-phosphate synthase subunit PdxS.